Reading from the N-terminus, the 267-residue chain is UDP-glucose:undecaprenyl-phosphate glucose-1-phosphate transferase (267 aa).

The helical transmembrane segment at 83–103 threads the bilayer; the sequence is VAAALLTALFAPLLLLAALAI.

Belongs to the bacterial sugar transferase family.

The protein resides in the cell membrane. It catalyses the reaction di-trans,octa-cis-undecaprenyl phosphate + UDP-alpha-D-glucose = alpha-D-glucosyl di-trans,octa-cis-undecaprenyl diphosphate + UMP. Functionally, is likely the initiating enzyme for holdfast polysaccharide synthesis. Catalyzes the transfer of the glucose-1-phosphate moiety from UDP-Glc onto the carrier lipid undecaprenyl phosphate (C55-P), forming a phosphoanhydride bond yielding to glucosyl-pyrophosphoryl-undecaprenol (Glc-PP-C55). Also possesses a weak galactose-1-P transferase activity. The polypeptide is UDP-glucose:undecaprenyl-phosphate glucose-1-phosphate transferase (pssY) (Caulobacter vibrioides (strain ATCC 19089 / CIP 103742 / CB 15) (Caulobacter crescentus)).